A 407-amino-acid chain; its full sequence is 1-deoxy-D-xylulose 5-phosphate reductoisomerase (407 aa).

Residues Thr25, Gly26, Ser27, Ile28, Asn53, and Asn136 each coordinate NADPH. Residue Lys137 coordinates 1-deoxy-D-xylulose 5-phosphate. Glu138 provides a ligand contact to NADPH. Asp162 is a Mn(2+) binding site. Positions 163, 164, 188, and 211 each coordinate 1-deoxy-D-xylulose 5-phosphate. Glu164 is a Mn(2+) binding site. Gly217 is a binding site for NADPH. 4 residues coordinate 1-deoxy-D-xylulose 5-phosphate: Ser224, Asn229, Lys230, and Glu233. Residue Glu233 participates in Mn(2+) binding.

Belongs to the DXR family. Mg(2+) serves as cofactor. Requires Mn(2+) as cofactor.

The enzyme catalyses 2-C-methyl-D-erythritol 4-phosphate + NADP(+) = 1-deoxy-D-xylulose 5-phosphate + NADPH + H(+). The protein operates within isoprenoid biosynthesis; isopentenyl diphosphate biosynthesis via DXP pathway; isopentenyl diphosphate from 1-deoxy-D-xylulose 5-phosphate: step 1/6. Functionally, catalyzes the NADPH-dependent rearrangement and reduction of 1-deoxy-D-xylulose-5-phosphate (DXP) to 2-C-methyl-D-erythritol 4-phosphate (MEP). The sequence is that of 1-deoxy-D-xylulose 5-phosphate reductoisomerase from Bradyrhizobium sp. (strain ORS 278).